The following is a 96-amino-acid chain: Large ribosomal subunit protein eL43 (96 aa).

Zn(2+) is bound by residues C41, C44, C59, and C62. A C4-type zinc finger spans residues 41–62; the sequence is CPVCAFPKLKRAGTSIWVCEKC.

Belongs to the eukaryotic ribosomal protein eL43 family. Putative zinc-binding subfamily. In terms of assembly, part of the 50S ribosomal subunit. The cofactor is Zn(2+).

Binds to the 23S rRNA. The chain is Large ribosomal subunit protein eL43 from Methanococcus maripaludis (strain DSM 14266 / JCM 13030 / NBRC 101832 / S2 / LL).